The sequence spans 232 residues: Protein TIFY 10c (232 aa).

Residues 54–73 (PPAAGAGGAFRPPPTTMNLL) are disordered. The Tify domain occupies 114–149 (AGEKAQQLTIFYGGKVVVFENFPSTKVKDLLQIVST). The disordered stretch occupies residues 151-176 (DGVDKNTGTAATQSLPRPAHNSLPDL). Residues 156 to 165 (NTGTAATQSL) show a composition bias toward polar residues. The Jas motif lies at 177-202 (PIARRNSLHRFLEKRKGRMNANAPYQ). Residues 179–186 (ARRNSLHR) carry the Nuclear localization signal motif.

It belongs to the TIFY/JAZ family. In terms of assembly, interacts with BHLH148. Interacts with COI1B in a coronatine-dependent manner. Coronatine is an analog of jasmonoyl isoleucine (JA-Ile). Interacts with TIFY5/JAZ2, TIFY6B/JAZ4, TIFY9/JAZ5, TIFY11A, TIFY11D/JAZ12 and TIFY11G/JAZ15. In terms of processing, ubiquitinated. Increase in jasmonoyl isoleucine (JA-Ile) levels mediates its degradation via COI1B-mediated proteasome pathway.

It localises to the nucleus. Its subcellular location is the cytoplasm. It is found in the cytosol. Its function is as follows. Repressor of jasmonate (JA) responses. Acts as a repressor of JA-induced resistance to the bacterial blight pathogen Xanthomonas oryzae pv. oryzae (Xoo). Regulates JA-induced accumulation of linalool at the transcriptional level of linalool synthase gene LIS. Linalool is important for resistance to bacterial blight pathogen Xoo. The protein is Protein TIFY 10c of Oryza sativa subsp. indica (Rice).